We begin with the raw amino-acid sequence, 570 residues long: Aspartyl aminopeptidase (570 aa).

His86 lines the Zn(2+) pocket. His160 serves as a coordination point for substrate. Zn(2+) is bound at residue Asp324. Glu379 is a substrate binding site. The Zn(2+) site is built by Glu380 and Asp434. 4 residues coordinate substrate: Asp434, His437, Lys462, and Tyr469. Zn(2+) is bound at residue His534.

The protein belongs to the peptidase M18 family. Homododecamer composed of homodimers and homotrimers that assemble into a tetrahedron shape to create a central tunnel containing the active sites. Homooctamer. The cofactor is Zn(2+).

The protein localises to the cytoplasm. It carries out the reaction Release of an N-terminal aspartate or glutamate from a peptide, with a preference for aspartate.. With respect to regulation, activated by Co(2+). Inhibited by high concentrations (&gt;1mM) of Zn(2+). In terms of biological role, aminopeptidase which specifically catalyzes the removal of glutamic acid or aspartic acid residues from the N-terminus of peptides. May play a role in the final step of host hemoglobin catabolism, by cleaving hemoglobin-derived oligopeptides in the cytoplasm. The sequence is that of Aspartyl aminopeptidase from Plasmodium falciparum (isolate 3D7).